The chain runs to 773 residues: ATP-dependent permease MDL2, mitochondrial (773 aa).

A mitochondrion-targeting transit peptide spans 1–90 (MLNGRLPLLR…SPISKGSARS (90 aa)). The span at 73-84 (PETSLPSASPIS) shows a compositional bias: polar residues. Positions 73–95 (PETSLPSASPISKGSARSAHAKE) are disordered. One can recognise an ABC transmembrane type-1 domain in the interval 119-413 (LLTAILLLTI…LSTFYSEIMQ (295 aa)). Helical transmembrane passes span 123–143 (ILLL…IGIV), 170–192 (FLSF…FILL), and 257–277 (VVGV…LLFF). 481-488 (GPSGRGKS) is an ATP binding site. The ABC transporter domain occupies 493-733 (LLLRYYNPTT…DDNDNNHDND (241 aa)). 2 stretches are compositionally biased toward basic and acidic residues: residues 706–733 (KEDL…HDND) and 740–762 (ETKD…DAAK). The interval 706 to 773 (KEDLNESKEH…ANPIKITPQP (68 aa)) is disordered.

It belongs to the ABC transporter superfamily. ABCB family. Mitochondrial peptide exporter (TC 3.A.1.212) subfamily.

It localises to the mitochondrion inner membrane. The protein is ATP-dependent permease MDL2, mitochondrial (MDL2) of Saccharomyces cerevisiae (strain ATCC 204508 / S288c) (Baker's yeast).